Reading from the N-terminus, the 193-residue chain is Peptidyl-tRNA hydrolase (193 aa).

His17 contributes to the tRNA binding site. Residue His22 is the Proton acceptor of the active site. Phe68, Asn70, and Asn116 together coordinate tRNA.

It belongs to the PTH family. Monomer.

The protein localises to the cytoplasm. The catalysed reaction is an N-acyl-L-alpha-aminoacyl-tRNA + H2O = an N-acyl-L-amino acid + a tRNA + H(+). Hydrolyzes ribosome-free peptidyl-tRNAs (with 1 or more amino acids incorporated), which drop off the ribosome during protein synthesis, or as a result of ribosome stalling. Its function is as follows. Catalyzes the release of premature peptidyl moieties from peptidyl-tRNA molecules trapped in stalled 50S ribosomal subunits, and thus maintains levels of free tRNAs and 50S ribosomes. This chain is Peptidyl-tRNA hydrolase, found in Xanthomonas axonopodis pv. citri (strain 306).